The chain runs to 187 residues: Large ribosomal subunit protein bL25 (187 aa).

Belongs to the bacterial ribosomal protein bL25 family. CTC subfamily. In terms of assembly, part of the 50S ribosomal subunit; part of the 5S rRNA/L5/L18/L25 subcomplex. Contacts the 5S rRNA. Binds to the 5S rRNA independently of L5 and L18.

Its function is as follows. This is one of the proteins that binds to the 5S RNA in the ribosome where it forms part of the central protuberance. The sequence is that of Large ribosomal subunit protein bL25 from Tropheryma whipplei (strain TW08/27) (Whipple's bacillus).